Here is a 186-residue protein sequence, read N- to C-terminus: Small ribosomal subunit protein uS5 (186 aa).

The 64-residue stretch at 20-83 folds into the S5 DRBM domain; that stretch reads FVDKLVHINR…EAAKRDMIFV (64 aa).

The protein belongs to the universal ribosomal protein uS5 family. In terms of assembly, part of the 30S ribosomal subunit. Contacts proteins S4 and S8.

In terms of biological role, with S4 and S12 plays an important role in translational accuracy. Located at the back of the 30S subunit body where it stabilizes the conformation of the head with respect to the body. This chain is Small ribosomal subunit protein uS5, found in Brucella ovis (strain ATCC 25840 / 63/290 / NCTC 10512).